The chain runs to 352 residues: S-adenosylmethionine:tRNA ribosyltransferase-isomerase (352 aa).

This sequence belongs to the QueA family. Monomer.

Its subcellular location is the cytoplasm. The enzyme catalyses 7-aminomethyl-7-carbaguanosine(34) in tRNA + S-adenosyl-L-methionine = epoxyqueuosine(34) in tRNA + adenine + L-methionine + 2 H(+). It participates in tRNA modification; tRNA-queuosine biosynthesis. In terms of biological role, transfers and isomerizes the ribose moiety from AdoMet to the 7-aminomethyl group of 7-deazaguanine (preQ1-tRNA) to give epoxyqueuosine (oQ-tRNA). The sequence is that of S-adenosylmethionine:tRNA ribosyltransferase-isomerase from Gloeobacter violaceus (strain ATCC 29082 / PCC 7421).